The primary structure comprises 243 residues: Probable 2-phosphosulfolactate phosphatase (243 aa).

This sequence belongs to the ComB family. The cofactor is Mg(2+).

The catalysed reaction is (2R)-O-phospho-3-sulfolactate + H2O = (2R)-3-sulfolactate + phosphate. This is Probable 2-phosphosulfolactate phosphatase from Prochlorococcus marinus (strain SARG / CCMP1375 / SS120).